The primary structure comprises 466 residues: Magnetosome-associated protein MamJ (466 aa).

Disordered stretches follow at residues 1 to 23 and 60 to 80; these read MAKNRRDRGTDLPGDGDQKISTG and ANQGGLVETAQPPSAPIRSQD. A not required to restore magnetic response to deletion mutant region spans residues 1–24; that stretch reads MAKNRRDRGTDLPGDGDQKISTGP. Residues 25-80 form a required to restore magnetic response to deletion mutant region; that stretch reads EIVSVTVHPSPNLAAAAKPVQGDIWASLLESSPWSANQGGLVETAQPPSAPIRSQD. 2 Tandem repeat unit repeats span residues 81–168 and 169–256; these read PVPV…VEPE and PAPV…VEPE. Not required to restore magnetic response to deletion mutant stretches follow at residues 81 to 256, 136 to 334, 333 to 374, and 432 to 466; these read PVPV…VEPE, ETDA…SQAE, AESV…AVEA, and VGSNVVAGTRRLAQTIEVSCGSCSSPKCDAEDKNK. 3 Glu-Pro-rich motif repeats span residues 145-164, 233-252, and 253-272; these read IEPEPALVEPVIEIEAEAAE and VEPEPAPVEPVIEIEAEAAE. Required to restore magnetic response to deletion mutant stretches follow at residues 375–432 and 426–466; these read TRQP…GRLV and VKGG…DKNK.

This sequence belongs to the magnetosome MamJ protein family. In terms of assembly, forms homooligomers. Interacts with MamK. In terms of processing, identified by N-terminal sequencing of a protein that is about 96 kDa in size. The protein runs anomalously on protein gels.

It is found in the magnetosome. Functionally, required for assembly of magnetosome chains. Regulates the dynamic behavior of MamK filaments. May connect magnetosomes to MamK filaments. Moves from the cell poles towards midcell; movement does not depend on the treadmilling ability of MamK, suggesting MamJ associates and disassociates continuously from the MamK filament. The chain is Magnetosome-associated protein MamJ from Magnetospirillum gryphiswaldense (strain DSM 6361 / JCM 21280 / NBRC 15271 / MSR-1).